The following is a 771-amino-acid chain: Hyperosmolality-gated Ca2+ permeable channel 1.2 (771 aa).

Over 1-4 the chain is Extracellular; that stretch reads MATL. The chain crosses the membrane as a helical span at residues 5-27; sequence QDIGVSAGINILSAFVFFIIFAV. Over 28 to 100 the chain is Cytoplasmic; that stretch reads LRLQPFNDRV…AGLDSVVYLR (73 aa). The helical transmembrane segment at 101-125 threads the bilayer; it reads IYWLGLKIFTPIAVLAWAVLVPVNW. Residues 126–156 lie on the Extracellular side of the membrane; the sequence is TNNTLEMAKQLRNVTSSDIDKLSVSNIPEYS. A helical membrane pass occupies residues 157–178; it reads MRFWTHIVMAYAFTIWTCYVLM. Residues 179 to 374 lie on the Cytoplasmic side of the membrane; that stretch reads KEYETIANMR…AIPYVSLTVR (196 aa). The chain crosses the membrane as a helical span at residues 375–401; that stretch reads RLIMHVAFFFLTFFFIVPIAFVQSLAT. Residues 402-419 are Extracellular-facing; it reads IEGIVKAAPFLKFIVDDK. Residues 420–445 traverse the membrane as a helical segment; it reads FMKSVIQGFLPGIALKLFLAFLPSIL. Over 446–462 the chain is Cytoplasmic; that stretch reads MIMSKFEGFTSISSLER. Residues 463 to 485 traverse the membrane as a helical segment; sequence RAAFRYYIFNLVNVFLASVIAGA. Residues 486-504 are Extracellular-facing; sequence AFEQLNSFLNQSANQIPKT. The chain crosses the membrane as a helical span at residues 505–533; that stretch reads IGVAIPMKATFFITYIMVDGWAGVAGEIL. Residues 534 to 566 lie on the Cytoplasmic side of the membrane; the sequence is MLKPLIMFHLKNAFLVKTDKDREEAMDPGSIGF. Residues 567-588 form a helical membrane-spanning segment; it reads NTGEPRIQLYFLLGLVYAPVTP. Position 589 (M589) is a topological domain, extracellular. Residues 590 to 605 form a helical membrane-spanning segment; it reads LLPFILVFFALAYIVY. Over 606–625 the chain is Cytoplasmic; it reads RHQIINVYNQEYESAAAFWP. A helical transmembrane segment spans residues 626–648; sequence DVHGRVIAALVISQLLLMGLLGT. The Extracellular portion of the chain corresponds to 649–651; that stretch reads KHA. A helical transmembrane segment spans residues 652 to 670; sequence ALAAPFLIALPVLTIGFHH. Over 671 to 771 the chain is Cytoplasmic; it reads FCKGRYEPAF…PSLPFSGKLV (101 aa). Residues 741 to 771 are disordered; that stretch reads PTKRQSRRNTPAPSIISGDDSPSLPFSGKLV.

This sequence belongs to the CSC1 (TC 1.A.17) family. As to quaternary structure, homodimer.

The protein localises to the membrane. With respect to regulation, activated by hyperosmotic shock after mannitol or NaCl treatment. Activated by mechanical pressure: activated in response to membrane stretch and poke. Membrane lipids play a key role in mechanosensation by acting as a wall mainly formed by lipid head groups. Functionally, acts as an osmosensitive calcium-permeable cation channel. Specifically conducts cations including Ca(2+), K(+) and Na(+) in vitro. Inactivation or closure of the channel is calcium-dependent. Mechanosensitive ion channel that converts mechanical stimuli into a flow of ions: activated in response to membrane stretch and poke. The polypeptide is Hyperosmolality-gated Ca2+ permeable channel 1.2 (Arabidopsis thaliana (Mouse-ear cress)).